We begin with the raw amino-acid sequence, 161 residues long: Endoribonuclease YbeY (161 aa).

The Zn(2+) site is built by His127, His131, and His137.

This sequence belongs to the endoribonuclease YbeY family. Zn(2+) is required as a cofactor.

The protein resides in the cytoplasm. Functionally, single strand-specific metallo-endoribonuclease involved in late-stage 70S ribosome quality control and in maturation of the 3' terminus of the 16S rRNA. The chain is Endoribonuclease YbeY from Listeria welshimeri serovar 6b (strain ATCC 35897 / DSM 20650 / CCUG 15529 / CIP 8149 / NCTC 11857 / SLCC 5334 / V8).